We begin with the raw amino-acid sequence, 237 residues long: Tetraspanin-8 (237 aa).

Topologically, residues 1-9 (MAGVSACIK) are cytoplasmic. A helical membrane pass occupies residues 10-33 (YSMFTFNFLFWLCGILILALAIWV). Residues 34-57 (RVSNDSQAIFGSEDVGSSSYVAVD) are Extracellular-facing. Residues 58 to 72 (ILIAVGAIIMILGFL) traverse the membrane as a helical segment. Over 73-83 (GCCGAIKESRC) the chain is Cytoplasmic. Residues 84–109 (MLLLFFIGLLLILLLQVATGILGAVF) traverse the membrane as a helical segment. The Extracellular portion of the chain corresponds to 110-205 (KSKSDRIVNE…SFIKDFLAKN (96 aa)). A glycan (N-linked (GlcNAc...) asparagine) is linked at Asn118. A helical transmembrane segment spans residues 206 to 230 (LIIVIGISFGLAVIEILGLVFSMVL). Topologically, residues 231–237 (YCQIGNK) are cytoplasmic.

Belongs to the tetraspanin (TM4SF) family. As to quaternary structure, forms homooligomers. Interacts with MEP1B. Interacts with integrin alpha3/ITGA3. Interacts with RICTOR and MTOR. Interacts with ADAM17. Interacts with ECE1. In terms of tissue distribution, gastric, colon, rectal, and pancreatic carcinomas.

Its subcellular location is the cell membrane. In terms of biological role, structural component of specialized membrane microdomains known as tetraspanin-enriched microdomains (TERMs), which act as platforms for receptor clustering and signaling. Participates thereby in diverse biological functions such as cell signal transduction, migration and protein trafficking. Promotes ADAM17-mediated TNF-alpha processing through recruitment of ADAM17 to tetraspanin-enriched micro-domains (TEMs). Forms a complex with RICTOR and integrin alpha3/ITGA3 to mediate mTORC2 activation and AKT1 phosphorylation leading to cell migration. Reduces apoptosis and autophagy induced by high glucose levels through forming a complex with mTOR and RICTOR. Contributes to the maintenance of intestinal epithelial barrier and plays a role in the regulation of intestine inflammation by switching interferon gamma receptor 1/IFNGR1 from clathrin-dependent to lipid raft-dependent endocytosis route to limit STAT1 activation magnitude and duration. Acts as a modulator of the endothelin axis by associating with endothelin converting enzyme ECE1 and regulating its activity of conversion of the endothelin-1 precursor to endothelin. This chain is Tetraspanin-8 (TSPAN8), found in Homo sapiens (Human).